A 211-amino-acid polypeptide reads, in one-letter code: Protein G12 (211 aa).

An N-terminal signal peptide occupies residues methionine 1 to cysteine 19.

The polypeptide is Protein G12 (Anopheles gambiae (African malaria mosquito)).